Reading from the N-terminus, the 855-residue chain is MAALGVAEAVAAPHPAEGAETAEAVELSRALSRLLPGLEADSKPGRRRALEALRRALEEPGPAADPTAFQGPWARLLLPRLLRCLSDPAEGCRALAVHLLDLGLRRAARPRDALPRLLPALAARLAGPVPARRPPEACEELRLALVQLLGLAVDLCGAALAPHLDDALRALRCSLLDPFAAVRRESCSCAAALAQATPDHFHMQSESLIGPLMQTISHQHWKVRVAAIEATGAVIHFGNGKSVDDVLSHFAQRLFDDVPQVRRAVASVVGGWLLCLRDRYSFFHKLIPLLLSSLNDEVPEVRQLAASLWEDVGLQWQKENEEDLKDKLDFAPPTPPHYPPHERRPVLGCRELVFRNLSKILPALCHDITDWVVGTRVKSAQLLPVLLLHAEDHATQHLEVVLRTLFQACTDEEAAVVQSCTRSAELVGTFVSPEVFLKLILSTLKKTPSASGLLVLASAMRGCPREALQPHLAAIATELAQAHICQASENDLYLERLLLCVQALVSVCHEDCGVASLQLLDVLLTIVALAGATGLRDKAQETMDSLAMVEGVSSCQDLYRKHIGPLLERVTASHLDWTAHSPELLQFSVIVAQSGPALGEALPHVVPTLRACLQPSQDPQMRLKLFSILSTVLLRATDTINSQGQFPSYLETVTKDILAPNLQWHAGRTAAAIRTAAVSCLWALTSSEVLSAEQIRDVQETLMPQVLTTLEEDSKMTRLISCRIINTFLKTSGGMTDPEKLIRIYPELLKRLDDVSNDVRMAAASTLVTWLQCVKGANAKSYYQSSVQYLYRELLVHLDDPERAIQDAILEVLKEGSGLFPDLLVRETEAVIHKHRSATYCEQLLQHVQAVPATQ.

Position 2 is an N-acetylalanine (Ala-2). 10 HEAT repeats span residues 71 to 109 (GPWA…RAAR), 202 to 240 (HMQS…FGNG), 241 to 278 (KSVD…CLRD), 280 to 318 (YSFF…QWQK), 354 to 376 (FRNL…VGTR), 377 to 414 (VKSA…DEEA), 599 to 638 (GEAL…RATD), 696 to 734 (RDVQ…TSGG), 738 to 776 (PEKL…CVKG), and 784 to 822 (QSSV…LFPD).

This sequence belongs to the DNAAF5 family. In terms of assembly, interacts with DNAI2; probably involved in outer arm dynein assembly. As to expression, expressed in nasal epithelium and lung epithelium by ciliated cells (at protein level).

The protein localises to the cytoplasm. It localises to the dynein axonemal particle. Its function is as follows. Cytoplasmic protein involved in the delivery of the dynein machinery to the motile cilium. It is required for the assembly of the axonemal dynein inner and outer arms, two structures attached to the peripheral outer doublet A microtubule of the axoneme, that play a crucial role in cilium motility. This is Dynein axonemal assembly factor 5 from Homo sapiens (Human).